Here is a 176-residue protein sequence, read N- to C-terminus: CDP-archaeol synthase (176 aa).

5 helical membrane passes run 12–32 (FIYWFLKYYLSPMIANASPVL), 60–80 (GFYVGVLMGFLTSIGIGIILC), 85–105 (ILIGLGSSIFALIGDLLGSFI), 118–138 (PIIDQLDFALMATLYYYFLGI), and 141–161 (FISYPLYILYSLIIILALHII).

The protein belongs to the CDP-archaeol synthase family. The cofactor is Mg(2+).

It localises to the cell membrane. It catalyses the reaction 2,3-bis-O-(geranylgeranyl)-sn-glycerol 1-phosphate + CTP + H(+) = CDP-2,3-bis-O-(geranylgeranyl)-sn-glycerol + diphosphate. The protein operates within membrane lipid metabolism; glycerophospholipid metabolism. Functionally, catalyzes the formation of CDP-2,3-bis-(O-geranylgeranyl)-sn-glycerol (CDP-archaeol) from 2,3-bis-(O-geranylgeranyl)-sn-glycerol 1-phosphate (DGGGP) and CTP. This reaction is the third ether-bond-formation step in the biosynthesis of archaeal membrane lipids. The chain is CDP-archaeol synthase from Staphylothermus marinus (strain ATCC 43588 / DSM 3639 / JCM 9404 / F1).